Reading from the N-terminus, the 486-residue chain is Odorant receptor coreceptor (486 aa).

The Cytoplasmic portion of the chain corresponds to methionine 1–serine 47. Residues valine 48–alanine 68 traverse the membrane as a helical segment. The Extracellular portion of the chain corresponds to glutamate 69 to serine 75. Residues glycine 76–valine 96 form a helical membrane-spanning segment. Residues asparagine 97–leucine 135 are Cytoplasmic-facing. A helical membrane pass occupies residues phenylalanine 136–phenylalanine 156. Over glycine 157–histidine 191 the chain is Extracellular. 2 N-linked (GlcNAc...) asparagine glycosylation sites follow: asparagine 169 and asparagine 188. A helical membrane pass occupies residues glycine 192–histidine 212. The Cytoplasmic portion of the chain corresponds to serine 213 to leucine 351. The chain crosses the membrane as a helical span at residues valine 352–isoleucine 372. Over lysine 373–tyrosine 390 the chain is Extracellular. The helical transmembrane segment at alanine 391 to phenylalanine 411 threads the bilayer. Topologically, residues glycine 412–threonine 462 are cytoplasmic. The helical transmembrane segment at valine 463–valine 483 threads the bilayer. Topologically, residues glutamine 484 to lysine 486 are extracellular.

This sequence belongs to the insect chemoreceptor superfamily. Heteromeric odorant receptor channel (TC 1.A.69) family. Orco subfamily. As to quaternary structure, heterodimer with conventional odorant receptors (ORs). Complexes exist early in the endomembrane system in olfactory sensory neurons (OSNs), coupling these complexes to the conserved ciliary trafficking pathway. As to expression, expression is restricted to olfactory sensory neurons (OSNs). Coexpressed with Snmp in a lateral-distal population of OSNs. Expressed in the embryonic antennal-maxillary complex, in all 21 OSNs of the larval dorsal organ, in the pupal antennal OSNs, in all 120 adult maxillary palp neurons and in approximately 70-80% of adult antennal OSNs, where expression is highest at the dorsal-medial edge. Localized to OSN cell bodies and to the distal portion of ciliated OSN dendrites.

It localises to the cell membrane. Functionally, odorant coreceptor which complexes with conventional odorant receptors (ORs) to form odorant-sensing units, providing sensitive and prolonged odorant signaling and calcium permeability. Orco is a universal and integral part of the functional odorant receptor, involved in the dendritic localization of other olfactory receptors. Expression of Orco alone leads to formation of rapid and transient ion channels not directly responding to odorants, but directly activated by intracellular cAMP or cGMP. Snmp, Or67d and lush act in concert to capture fatty-acid-derived male pheromone 11-cis vaccenyl acetate (cVA) molecules on the surface of Or67d expressing olfactory dendrites and facilitate their transfer to the odorant-receptor Orco complex. This is Odorant receptor coreceptor (Orco) from Drosophila melanogaster (Fruit fly).